The sequence spans 729 residues: Catalase-peroxidase (729 aa).

The segment at residues 95–217 (WHSAGTYRIT…LAAVQMGLIY (123 aa)) is a cross-link (tryptophyl-tyrosyl-methioninium (Trp-Tyr) (with M-243)). H96 serves as the catalytic Proton acceptor. Residues 217–243 (YVNPEGPNGKPDPIAAATDIRETFFRM) constitute a cross-link (tryptophyl-tyrosyl-methioninium (Tyr-Met) (with W-95)). Residue H258 coordinates heme b.

Belongs to the peroxidase family. Peroxidase/catalase subfamily. As to quaternary structure, homodimer or homotetramer. Heme b serves as cofactor. Post-translationally, formation of the three residue Trp-Tyr-Met cross-link is important for the catalase, but not the peroxidase activity of the enzyme.

The catalysed reaction is H2O2 + AH2 = A + 2 H2O. It carries out the reaction 2 H2O2 = O2 + 2 H2O. Bifunctional enzyme with both catalase and broad-spectrum peroxidase activity. The polypeptide is Catalase-peroxidase (Nitrobacter hamburgensis (strain DSM 10229 / NCIMB 13809 / X14)).